The sequence spans 45 residues: uncharacterized protein (45 aa).

This is an uncharacterized protein from Bacillus subtilis (strain 168).